Reading from the N-terminus, the 967-residue chain is Isoleucine--tRNA ligase (967 aa).

Residues 68–78 (PYANGTLHMGH) carry the 'HIGH' region motif. Glu-583 serves as a coordination point for L-isoleucyl-5'-AMP. Positions 624-628 (KMSKS) match the 'KMSKS' region motif. Lys-627 is a binding site for ATP. Cys-937, Cys-940, Cys-957, and Cys-960 together coordinate Zn(2+).

This sequence belongs to the class-I aminoacyl-tRNA synthetase family. IleS type 1 subfamily. Monomer. Zn(2+) is required as a cofactor.

It is found in the cytoplasm. The enzyme catalyses tRNA(Ile) + L-isoleucine + ATP = L-isoleucyl-tRNA(Ile) + AMP + diphosphate. Functionally, catalyzes the attachment of isoleucine to tRNA(Ile). As IleRS can inadvertently accommodate and process structurally similar amino acids such as valine, to avoid such errors it has two additional distinct tRNA(Ile)-dependent editing activities. One activity is designated as 'pretransfer' editing and involves the hydrolysis of activated Val-AMP. The other activity is designated 'posttransfer' editing and involves deacylation of mischarged Val-tRNA(Ile). The polypeptide is Isoleucine--tRNA ligase (Prochlorococcus marinus (strain NATL1A)).